We begin with the raw amino-acid sequence, 176 residues long: Disulfide bond formation protein B (176 aa).

The Cytoplasmic segment spans residues 1 to 14; it reads MLRFLNQCSQGRGA. The chain crosses the membrane as a helical span at residues 15–31; it reads WLLMAFTALALELTALW. At 32-49 the chain is on the periplasmic side; it reads FQHVMLLKPCVLCIYERC. Cysteine 41 and cysteine 44 form a disulfide bridge. A helical transmembrane segment spans residues 50–65; the sequence is ALFGVLGAALIGAIAP. Topologically, residues 66 to 71 are cytoplasmic; the sequence is KTPLRY. Residues 72–89 form a helical membrane-spanning segment; it reads VAMVIWLYSAFRGVQLTY. The Periplasmic portion of the chain corresponds to 90–144; sequence EHTMLQLYPSPFATCDFMVRFPEWLPLDKWVPQVFVASGDCAERQWDFLGLEMPQ. A disulfide bridge connects residues cysteine 104 and cysteine 130. The chain crosses the membrane as a helical span at residues 145-163; sequence WLLGIFIAYLIVAVLVMIS. At 164–176 the chain is on the cytoplasmic side; that stretch reads QPFKAKKRDLFGR.

This sequence belongs to the DsbB family.

Its subcellular location is the cell inner membrane. Functionally, required for disulfide bond formation in some periplasmic proteins. Acts by oxidizing the DsbA protein. This Shigella sonnei (strain Ss046) protein is Disulfide bond formation protein B.